A 276-amino-acid chain; its full sequence is NADPH-dependent 7-cyano-7-deazaguanine reductase (276 aa).

83–85 (VES) provides a ligand contact to substrate. 85–86 (SK) contributes to the NADPH binding site. Catalysis depends on Cys-184, which acts as the Thioimide intermediate. The active-site Proton donor is the Asp-191. 223-224 (HE) is a substrate binding site. 252 to 253 (RG) is a binding site for NADPH.

Belongs to the GTP cyclohydrolase I family. QueF type 2 subfamily. In terms of assembly, homodimer.

The protein resides in the cytoplasm. The catalysed reaction is 7-aminomethyl-7-carbaguanine + 2 NADP(+) = 7-cyano-7-deazaguanine + 2 NADPH + 3 H(+). The protein operates within tRNA modification; tRNA-queuosine biosynthesis. Catalyzes the NADPH-dependent reduction of 7-cyano-7-deazaguanine (preQ0) to 7-aminomethyl-7-deazaguanine (preQ1). This Azotobacter vinelandii (strain DJ / ATCC BAA-1303) protein is NADPH-dependent 7-cyano-7-deazaguanine reductase.